The chain runs to 223 residues: MWGYTVEKGWFHVKHEEIESIASHVFGGNVDKAYAYHELLATDGSTRGFIGPREVPKLWSRHLLNCAVIGEAMDENIRVADIGSGAGLPGIPLAIARPDLTITLIEPLLKRSVFLGEVKEKLELDNVTVIRGRAEEKAVREQLGLVDVATSRAVAPLGKLAGWSLPLVRLGGKMIAMKGSSVHEELERDEKMIWKAGGGKVKIFSVGEVLEEPTTLISIRKVR.

S-adenosyl-L-methionine is bound by residues Gly-83, Leu-88, 134–135, and Arg-152; that span reads AE.

It belongs to the methyltransferase superfamily. RNA methyltransferase RsmG family.

It localises to the cytoplasm. Specifically methylates the N7 position of guanine in position 518 of 16S rRNA. The sequence is that of Ribosomal RNA small subunit methyltransferase G from Corynebacterium diphtheriae (strain ATCC 700971 / NCTC 13129 / Biotype gravis).